Here is a 155-residue protein sequence, read N- to C-terminus: Putative pre-16S rRNA nuclease (155 aa).

It belongs to the YqgF nuclease family.

Its subcellular location is the cytoplasm. Its function is as follows. Could be a nuclease involved in processing of the 5'-end of pre-16S rRNA. The sequence is that of Putative pre-16S rRNA nuclease from Corynebacterium jeikeium (strain K411).